The primary structure comprises 219 residues: Protein GrpE (219 aa).

2 disordered regions span residues 1–32 and 59–87; these read MSTT…LDAT and FDGV…AERT.

Belongs to the GrpE family. Homodimer.

The protein resides in the cytoplasm. Its function is as follows. Participates actively in the response to hyperosmotic and heat shock by preventing the aggregation of stress-denatured proteins, in association with DnaK and GrpE. It is the nucleotide exchange factor for DnaK and may function as a thermosensor. Unfolded proteins bind initially to DnaJ; upon interaction with the DnaJ-bound protein, DnaK hydrolyzes its bound ATP, resulting in the formation of a stable complex. GrpE releases ADP from DnaK; ATP binding to DnaK triggers the release of the substrate protein, thus completing the reaction cycle. Several rounds of ATP-dependent interactions between DnaJ, DnaK and GrpE are required for fully efficient folding. The sequence is that of Protein GrpE from Corynebacterium diphtheriae (strain ATCC 700971 / NCTC 13129 / Biotype gravis).